The primary structure comprises 212 residues: Thymidylate kinase (212 aa).

11–18 (GIEGSGKT) is an ATP binding site.

This sequence belongs to the thymidylate kinase family.

It catalyses the reaction dTMP + ATP = dTDP + ADP. Functionally, phosphorylation of dTMP to form dTDP in both de novo and salvage pathways of dTTP synthesis. The polypeptide is Thymidylate kinase (Buchnera aphidicola subsp. Baizongia pistaciae (strain Bp)).